The sequence spans 191 residues: Potassium-transporting ATPase KdpC subunit (191 aa).

The helical transmembrane segment at 11–31 (LFVLLTAVTGVVYPLAVTGIA) threads the bilayer.

Belongs to the KdpC family. The system is composed of three essential subunits: KdpA, KdpB and KdpC.

It is found in the cell inner membrane. Part of the high-affinity ATP-driven potassium transport (or Kdp) system, which catalyzes the hydrolysis of ATP coupled with the electrogenic transport of potassium into the cytoplasm. This subunit acts as a catalytic chaperone that increases the ATP-binding affinity of the ATP-hydrolyzing subunit KdpB by the formation of a transient KdpB/KdpC/ATP ternary complex. In Dechloromonas aromatica (strain RCB), this protein is Potassium-transporting ATPase KdpC subunit.